The sequence spans 457 residues: Amidophosphoribosyltransferase (457 aa).

Cys-2 (nucleophile) is an active-site residue. The Glutamine amidotransferase type-2 domain maps to 2–223; the sequence is CGVVGIYHPD…PGKAAIIKDG (222 aa). A [4Fe-4S] cluster-binding site is contributed by Cys-239. Residues Ser-286, Asp-348, and Asp-349 each coordinate Mg(2+). Positions 385, 438, and 441 each coordinate [4Fe-4S] cluster.

In the C-terminal section; belongs to the purine/pyrimidine phosphoribosyltransferase family. It depends on Mg(2+) as a cofactor. [4Fe-4S] cluster is required as a cofactor.

The enzyme catalyses 5-phospho-beta-D-ribosylamine + L-glutamate + diphosphate = 5-phospho-alpha-D-ribose 1-diphosphate + L-glutamine + H2O. It functions in the pathway purine metabolism; IMP biosynthesis via de novo pathway; N(1)-(5-phospho-D-ribosyl)glycinamide from 5-phospho-alpha-D-ribose 1-diphosphate: step 1/2. Its function is as follows. Catalyzes the formation of phosphoribosylamine from phosphoribosylpyrophosphate (PRPP) and glutamine. The polypeptide is Amidophosphoribosyltransferase (Archaeoglobus fulgidus (strain ATCC 49558 / DSM 4304 / JCM 9628 / NBRC 100126 / VC-16)).